The chain runs to 929 residues: Thrombospondin-3b (929 aa).

The first 22 residues, 1-22 (MELRKIVPNLLVLYVAVHFSQS), serve as a signal peptide directing secretion. In terms of domain architecture, Laminin G-like spans 24–192 (EIKVINVLEL…VESVKLALGG (169 aa)). Asn-45 carries an N-linked (GlcNAc...) asparagine glycan. 18 cysteine pairs are disulfide-bonded: Cys-277–Cys-288, Cys-282–Cys-299, Cys-319–Cys-343, Cys-349–Cys-362, Cys-356–Cys-371, Cys-374–Cys-386, Cys-392–Cys-406, Cys-400–Cys-416, Cys-418–Cys-429, Cys-445–Cys-452, Cys-457–Cys-477, Cys-493–Cys-513, Cys-516–Cys-536, Cys-552–Cys-572, Cys-575–Cys-595, Cys-613–Cys-633, Cys-653–Cys-673, and Cys-689–Cys-910. Residues 345–384 (DIDECAELSGSCVPNSVCINTVGSFKCGQCKAGFVGNQTV) form the EGF-like 1; calcium-binding domain. Asn-381 carries an N-linked (GlcNAc...) asparagine glycan. Positions 388-430 (ARRTCETLGYSPCDVNSHCVMGRNSDVSCVCNVGWAGNGNICG) constitute an EGF-like 2 domain. TSP type-3 repeat units follow at residues 431–465 (PDSD…NSGQ), 466–501 (EDTD…NKDQ), 502–524 (QNSD…NGDQ), 525–560 (LDTD…NPMQ), 561–583 (TDRD…DPLQ), 584–621 (SDMD…NSSQ), 622–661 (LDSD…NPSQ), and 662–697 (IDTD…EVTM). Basic and acidic residues predominate over residues 602-613 (DGDGYQDTRDNC). A disordered region spans residues 602–651 (DGDGYQDTRDNCPEVPNSSQLDSDNDGIGDECDDDDDNDGIPDILPPGPD). Residue Asn-618 is glycosylated (N-linked (GlcNAc...) asparagine). Positions 624-641 (SDNDGIGDECDDDDDNDG) are enriched in acidic residues. The TSP C-terminal domain occupies 701 to 915 (RAFQTVILDP…LGYRCNDSIP (215 aa)). The N-linked (GlcNAc...) asparagine glycan is linked to Asn-911.

This sequence belongs to the thrombospondin family. Oligomer; disulfide-linked.

Its function is as follows. Adhesive glycoprotein that mediates cell-to-cell and cell-to-matrix interactions. Can bind to fibrinogen, fibronectin, laminin and type V collagen. The chain is Thrombospondin-3b from Danio rerio (Zebrafish).